Consider the following 430-residue polypeptide: MDVVDSLFVNGSNITSACELGFENETLFCLDRPRPSKEWQPAVQILLYSLIFLLSVLGNTLVITVLIRNKRMRTVTNIFLLSLAVSDLMLCLFCMPFNLIPSLLKDFIFGSAVCKTTTYFMGTSVSVSTFNLVAISLERYGAICKPLQSRVWQTKSHALKVIAATWCLSFTIMTPYPIYSNLVPFTKNNNQTGNMCRFLLPNDVMQQTWHTFLLLILFLIPGIVMMVAYGLISLELYQGIKFDAIQKKSAKERKTSTGSSGPMEDSDGCYLQKSRHPRKLELRQLSPSSSGSNRINRIRSSSSTANLMAKKRVIRMLIVIVVLFFLCWMPIFSANAWRAYDTVSAERHLSGTPISFILLLSYTSSCVNPIIYCFMNKRFRLGFMATFPCCPNPGTPGVRGEMGEEEEGRTTGASLSRYSYSHMSTSAPPP.

Over 1–41 (MDVVDSLFVNGSNITSACELGFENETLFCLDRPRPSKEWQP) the chain is Extracellular. Residues asparagine 10, asparagine 13, and asparagine 24 are each glycosylated (N-linked (GlcNAc...) asparagine). An intrachain disulfide couples cysteine 18 to cysteine 29. Residues 42-67 (AVQILLYSLIFLLSVLGNTLVITVLI) form a helical membrane-spanning segment. Residues 68–77 (RNKRMRTVTN) are Cytoplasmic-facing. The helical transmembrane segment at 78 to 104 (IFLLSLAVSDLMLCLFCMPFNLIPSLL) threads the bilayer. Residues 105–115 (KDFIFGSAVCK) are Extracellular-facing. A disulfide bridge connects residues cysteine 114 and cysteine 196. The chain crosses the membrane as a helical span at residues 116–137 (TTTYFMGTSVSVSTFNLVAISL). The Cytoplasmic portion of the chain corresponds to 138 to 157 (ERYGAICKPLQSRVWQTKSH). A helical transmembrane segment spans residues 158 to 178 (ALKVIAATWCLSFTIMTPYPI). The Extracellular segment spans residues 179–210 (YSNLVPFTKNNNQTGNMCRFLLPNDVMQQTWH). Asparagine 190 carries N-linked (GlcNAc...) asparagine glycosylation. A helical membrane pass occupies residues 211–234 (TFLLLILFLIPGIVMMVAYGLISL). Residues 235–315 (ELYQGIKFDA…NLMAKKRVIR (81 aa)) lie on the Cytoplasmic side of the membrane. A helical transmembrane segment spans residues 316 to 336 (MLIVIVVLFFLCWMPIFSANA). Topologically, residues 337 to 351 (WRAYDTVSAERHLSG) are extracellular. A helical membrane pass occupies residues 352–375 (TPISFILLLSYTSSCVNPIIYCFM). The Cytoplasmic portion of the chain corresponds to 376–430 (NKRFRLGFMATFPCCPNPGTPGVRGEMGEEEEGRTTGASLSRYSYSHMSTSAPPP). A lipid anchor (S-palmitoyl cysteine) is attached at cysteine 389. A disordered region spans residues 396–430 (PGVRGEMGEEEEGRTTGASLSRYSYSHMSTSAPPP). The segment covering 413–430 (ASLSRYSYSHMSTSAPPP) has biased composition (polar residues).

It belongs to the G-protein coupled receptor 1 family.

It is found in the cell membrane. Functionally, receptor for cholecystokinin. Mediates pancreatic growth and enzyme secretion, smooth muscle contraction of the gall bladder and stomach. Has a 1000-fold higher affinity for CCK rather than for gastrin. It modulates feeding and dopamine-induced behavior in the central and peripheral nervous system. This receptor mediates its action by association with G proteins that activate a phosphatidylinositol-calcium second messenger system. This chain is Cholecystokinin receptor type A (CCKAR), found in Cavia porcellus (Guinea pig).